We begin with the raw amino-acid sequence, 1031 residues long: Pre-mRNA-splicing factor SYF1 (1031 aa).

HAT repeat units follow at residues 28–60 (HLIP…NVKE), 90–122 (DGLQ…TRQS), 214–248 (KNGS…WAEI), and 250–269 (GGDA…PSLT). The disordered stretch occupies residues 346–368 (VEEKVDGEQPQVEGQEQQPQEEP). Low complexity predominate over residues 353 to 368 (EQPQVEGQEQQPQEEP). HAT repeat units follow at residues 452–487 (GEFE…FSET), 610–646 (PDLE…MELR), 664–698 (PKNT…LEES), 700–732 (GTVE…FLEE), 734–768 (KYFE…KFVK), 773–807 (KKLE…LEEE), 845–879 (FGLP…MERK), and 881–915 (GEID…FEIE). Disordered stretches follow at residues 948-969 (AAAS…QDAA) and 1003-1031 (TNAN…EDEF).

This sequence belongs to the crooked-neck family. Associated with the spliceosome.

The protein localises to the nucleus. Involved in pre-mRNA splicing and cell cycle progression. In Cryptococcus neoformans var. neoformans serotype D (strain B-3501A) (Filobasidiella neoformans), this protein is Pre-mRNA-splicing factor SYF1 (SYF1).